The primary structure comprises 735 residues: MLCLLLLLCGLASLGGPLKKYVENSGMQITVPEKIRSVKRGSVESEVSYKIVIENTTYIVNLVRKMFLPHDFQVYSYDSAGIMKPFEDYSQNFCYYQGHIEGFPTSLASISTCAGLRGLLQFETVSYGIEPLKSSIGFEHVIYPVKHDNEKSQYLKKSINVKNVVYKIKSIKSSVRTHYIEMHIIVEKNLYKHMGGNTATVTEKIFQLVGLMNAFFSTLNLTVILASLELWIDENKIPTTGDVNELLHAFQKWKKSYLVLRPHDVAFLLVYRESPSYIGAIFQGMICNTSYGGGIALHSKTITLDSFGVILVQLLSVSMGIAYDNADLCRCRGAICLMSPEAVFSSGMKMFSNCSVKAFKLFTSSQVSQCLQNQPYLEPVYRSNPVCGNNRVEQGEDCDCGSQEECQDTCCDAATCRLKSTSRCAQGPCCNQCEFKTKGEVCRESTDECDLPEYCNGSSGACQEDLYVINGHRCANEEWICMNGRCLSGKAQVQETFGTEMEMGSVDCFEQLNTKNDITGNCGILSPGNYKACGASNWKCGKLICSYDKSEILRNKEGMTIYANISGHICVSIEYPPGHAKSALMWVRDGTVCGPSEVCRQQQCVSSSYLGYDCTPATCSDHGVCNNKRHCHCNPTYVPPNCETQDSTKPGGSVDSGNLRYEPIPETYFVEGAYHTKSRKWPFFLIIPFFVIFSVLVATVVKVYYQKKKWKTEDYANDENIESESEPKSSKVSSK.

The first 15 residues, 1 to 15 (MLCLLLLLCGLASLG), serve as a signal peptide directing secretion. A propeptide spanning residues 16–176 (GPLKKYVENS…KIKSIKSSVR (161 aa)) is cleaved from the precursor. The Extracellular segment spans residues 16-680 (GPLKKYVENS…EGAYHTKSRK (665 aa)). N-linked (GlcNAc...) asparagine glycans are attached at residues N55, N220, and N288. One can recognise a Peptidase M12B domain in the interval 178 to 375 (HYIEMHIIVE…QVSQCLQNQP (198 aa)). Intrachain disulfides connect C287–C370, C329–C354, C331–C336, and C442–C455. N353 carries N-linked (GlcNAc...) asparagine glycosylation. In terms of domain architecture, Disintegrin spans 384–470 (NPVCGNNRVE…ACQEDLYVIN (87 aa)). 2 N-linked (GlcNAc...) asparagine glycosylation sites follow: N456 and N564. One can recognise an EGF-like domain in the interval 610 to 643 (LGYDCTPATCSDHGVCNNKRHCHCNPTYVPPNCE). 3 cysteine pairs are disulfide-bonded: C614/C625, C619/C631, and C633/C642. A helical membrane pass occupies residues 681 to 701 (WPFFLIIPFFVIFSVLVATVV). The Cytoplasmic portion of the chain corresponds to 702–735 (KVYYQKKKWKTEDYANDENIESESEPKSSKVSSK). A disordered region spans residues 716–735 (ANDENIESESEPKSSKVSSK). Residue S723 is modified to Phosphoserine.

In terms of assembly, heterodimer with ADAM1/fertilin subunit alpha. In terms of processing, the signal and the metalloprotease domain are cleaved during the epididymal maturation of the spermatozoa. Expressed specifically in testis.

Its subcellular location is the membrane. Sperm surface membrane protein that may be involved in sperm-egg plasma membrane adhesion and fusion during fertilization. Could have a direct role in sperm-zona binding or migration of sperm from the uterus into the oviduct. Interactions with egg membrane could be mediated via binding between its disintegrin-like domain to one or more integrins receptors on the egg. This is a non catalytic metalloprotease-like protein. This is Disintegrin and metalloproteinase domain-containing protein 2 (ADAM2) from Cavia porcellus (Guinea pig).